The sequence spans 416 residues: Gamma-glutamyl phosphate reductase (416 aa).

Belongs to the gamma-glutamyl phosphate reductase family.

It is found in the cytoplasm. The enzyme catalyses L-glutamate 5-semialdehyde + phosphate + NADP(+) = L-glutamyl 5-phosphate + NADPH + H(+). It participates in amino-acid biosynthesis; L-proline biosynthesis; L-glutamate 5-semialdehyde from L-glutamate: step 2/2. Functionally, catalyzes the NADPH-dependent reduction of L-glutamate 5-phosphate into L-glutamate 5-semialdehyde and phosphate. The product spontaneously undergoes cyclization to form 1-pyrroline-5-carboxylate. This is Gamma-glutamyl phosphate reductase from Streptococcus pyogenes serotype M4 (strain MGAS10750).